We begin with the raw amino-acid sequence, 803 residues long: Protein AMEIOTIC 1 homolog (803 aa).

2 disordered regions span residues 21–64 and 264–333; these read RPQV…QSLS and RLRQ…RWSA. The span at 39–50 shows a compositional bias: basic and acidic residues; sequence NGKDDANHDESK. The span at 51-64 shows a compositional bias: polar residues; the sequence is NQSPGLPLSRQSLS. Residues 283–295 show a composition bias toward basic and acidic residues; that stretch reads KREEAESSMDKSR. A compositionally biased stretch (basic residues) spans 296 to 313; it reads AARKKKAKTYKSPKKVEK. A compositionally biased stretch (basic and acidic residues) spans 314–333; sequence RRVVEAKDGDPRRGKDRWSA. A coiled-coil region spans residues 450 to 567; sequence VKKKVEELAE…SSFLSLKEQL (118 aa). The disordered stretch occupies residues 651-688; sequence ISGGGSSSCPVASGPEQLPRSSSCPSIGPGGLPPSSRA.

It localises to the nucleus. It is found in the chromosome. In terms of biological role, plays a fundamental role in building the proper chromosome structure at the beginning of meiosis in male meiocytes. Required for the transition from leptotene to zygotene in meiocytes. Required for homologous chromosome pairing. This chain is Protein AMEIOTIC 1 homolog, found in Oryza sativa subsp. japonica (Rice).